The chain runs to 114 residues: T cell receptor beta variable 5-4 (114 aa).

The N-terminal stretch at 1–21 is a signal peptide; that stretch reads MGPGLLCWALLCLLGAGSVET. Residues 22–114 enclose the Ig-like domain; the sequence is GVTQSPTHLI…SALYLCASSL (93 aa). Cysteines 42 and 110 form a disulfide. An N-linked (GlcNAc...) asparagine glycan is attached at Asn90.

As to quaternary structure, alpha-beta TR is a heterodimer composed of an alpha and beta chain; disulfide-linked. The alpha-beta TR is associated with the transmembrane signaling CD3 coreceptor proteins to form the TR-CD3 (TcR or TCR). The assembly of alpha-beta TR heterodimers with CD3 occurs in the endoplasmic reticulum where a single alpha-beta TR heterodimer associates with one CD3D-CD3E heterodimer, one CD3G-CD3E heterodimer and one CD247 homodimer forming a stable octameric structure. CD3D-CD3E and CD3G-CD3E heterodimers preferentially associate with TR alpha and TR beta chains, respectively. The association of the CD247 homodimer is the last step of TcR assembly in the endoplasmic reticulum and is required for transport to the cell surface.

The protein resides in the cell membrane. In terms of biological role, v region of the variable domain of T cell receptor (TR) beta chain that participates in the antigen recognition. Alpha-beta T cell receptors are antigen specific receptors which are essential to the immune response and are present on the cell surface of T lymphocytes. Recognize peptide-major histocompatibility (MH) (pMH) complexes that are displayed by antigen presenting cells (APC), a prerequisite for efficient T cell adaptive immunity against pathogens. Binding of alpha-beta TR to pMH complex initiates TR-CD3 clustering on the cell surface and intracellular activation of LCK that phosphorylates the ITAM motifs of CD3G, CD3D, CD3E and CD247 enabling the recruitment of ZAP70. In turn ZAP70 phosphorylates LAT, which recruits numerous signaling molecules to form the LAT signalosome. The LAT signalosome propagates signal branching to three major signaling pathways, the calcium, the mitogen-activated protein kinase (MAPK) kinase and the nuclear factor NF-kappa-B (NF-kB) pathways, leading to the mobilization of transcription factors that are critical for gene expression and essential for T cell growth and differentiation. The T cell repertoire is generated in the thymus, by V-(D)-J rearrangement. This repertoire is then shaped by intrathymic selection events to generate a peripheral T cell pool of self-MH restricted, non-autoaggressive T cells. Post-thymic interaction of alpha-beta TR with the pMH complexes shapes TR structural and functional avidity. The chain is T cell receptor beta variable 5-4 from Homo sapiens (Human).